A 321-amino-acid chain; its full sequence is Tyrosine recombinase XerC (321 aa).

The region spanning 16-107 (SDIGQQIVRW…GLRSFARFLE (92 aa)) is the Core-binding (CB) domain. The region spanning 128 to 315 (SVPKPIHMSA…DSERLLDVYR (188 aa)) is the Tyr recombinase domain. Active-site residues include Arg173, Lys199, His267, Arg270, and His293. The O-(3'-phospho-DNA)-tyrosine intermediate role is filled by Tyr302.

Belongs to the 'phage' integrase family. XerC subfamily. Forms a cyclic heterotetrameric complex composed of two molecules of XerC and two molecules of XerD.

It is found in the cytoplasm. Functionally, site-specific tyrosine recombinase, which acts by catalyzing the cutting and rejoining of the recombining DNA molecules. The XerC-XerD complex is essential to convert dimers of the bacterial chromosome into monomers to permit their segregation at cell division. It also contributes to the segregational stability of plasmids. This Nitrobacter winogradskyi (strain ATCC 25391 / DSM 10237 / CIP 104748 / NCIMB 11846 / Nb-255) protein is Tyrosine recombinase XerC.